A 603-amino-acid polypeptide reads, in one-letter code: NADPH-dependent diflavin oxidoreductase 1 (603 aa).

A Flavodoxin-like domain is found at 10–155 (VTILYGSETG…YYSEWETNLL (146 aa)). FMN-binding positions include 16-21 (SETGNA), 64-67 (STTG), 102-111 (IGDSSYPKFN), and glutamate 137. The 243-residue stretch at 209-451 (TNLLLGSVKA…HKSNLKFELP (243 aa)) folds into the FAD-binding FR-type domain. FAD-binding positions include arginine 359, 390–393 (RLFS), and 422–425 (GLCT). Residues threonine 465 and 521–522 (SR) contribute to the NADP(+) site. Residue tryptophan 603 participates in FAD binding.

This sequence belongs to the NADPH-dependent diflavin oxidoreductase NDOR1 family. The protein in the N-terminal section; belongs to the flavodoxin family. In the C-terminal section; belongs to the flavoprotein pyridine nucleotide cytochrome reductase family. In terms of assembly, interacts with DRE2; as part of the cytosolic iron-sulfur (Fe-S) protein assembly (CIA) machinery. The cofactor is FAD. Requires FMN as cofactor.

The protein resides in the cytoplasm. It localises to the mitochondrion. The catalysed reaction is 2 oxidized [2Fe-2S]-[protein] + NADPH = 2 reduced [2Fe-2S]-[protein] + NADP(+) + H(+). Its function is as follows. NADPH-dependent reductase which is a central component of the cytosolic iron-sulfur (Fe-S) protein assembly (CIA) machinery. Transfers electrons from NADPH via its FAD and FMN prosthetic groups to the [2Fe-2S] cluster of DRE2, another key component of the CIA machinery. In turn, this reduced cluster provides electrons for assembly of cytosolic iron-sulfur cluster proteins. Positively controls H(2)O(2)-induced cell death. This Debaryomyces hansenii (strain ATCC 36239 / CBS 767 / BCRC 21394 / JCM 1990 / NBRC 0083 / IGC 2968) (Yeast) protein is NADPH-dependent diflavin oxidoreductase 1.